Here is a 1088-residue protein sequence, read N- to C-terminus: Protocadherin-19 (1088 aa).

The N-terminal stretch at 1 to 24 (MHSKDMDFVQMFVCFLLCWTGVDA) is a signal peptide. Residues 25–678 (VFNLKYTVEE…QEQIGPVNLS (654 aa)) are Extracellular-facing. Cadherin domains are found at residues 31–130 (TVEE…APRF), 131–239 (PTNH…NPVF), 240–347 (DEPV…APEI), 351–454 (SENS…PPYF), 455–563 (TKPH…TPVM), and 569–676 (VNGT…GPVN). Positions 34 and 35 each coordinate Ca(2+). Asn-44 carries an N-linked (GlcNAc...) asparagine glycan. The Ca(2+) site is built by Asp-89 and Asp-91. A disulfide bond links Cys-94 and Cys-100. Asp-122, Val-123, Asn-124, Asp-125, Asn-126, Glu-141, Asp-156, Asp-158, Asn-162, Glu-200, Asp-213, Asp-231, Ser-232, Asn-233, Asp-234, Asn-235, and Glu-250 together coordinate Ca(2+). N-linked (GlcNAc...) asparagine glycosylation is present at Asn-262. Ca(2+) contacts are provided by Asp-265, Asp-267, and Asn-271. An N-linked (GlcNAc...) asparagine glycan is attached at Asn-284. Residues Asp-306, Glu-308, Asp-339, Ile-340, Asn-341, Asp-342, Asn-343, Glu-361, and Asp-376 each contribute to the Ca(2+) site. Asn-377 carries an N-linked (GlcNAc...) asparagine glycan. Ca(2+)-binding residues include Asp-378, Asn-382, Asp-413, and Glu-415. An N-linked (GlcNAc...) asparagine glycan is attached at Asn-421. Ca(2+) is bound by residues Asp-428, Asp-446, Glu-447, Asn-448, Asp-449, Asn-450, Glu-465, Asp-480, Asp-482, Asn-486, Asn-522, Glu-524, and Asp-537. N-linked (GlcNAc...) asparagine glycosylation occurs at Asn-486. An N-linked (GlcNAc...) asparagine glycan is attached at Asn-546. Asp-555, Val-556, Asn-557, Asp-558, and Asn-559 together coordinate Ca(2+). A glycan (N-linked (GlcNAc...) asparagine) is linked at Asn-570. Ca(2+) is bound by residues Asp-594, Asp-596, Asn-600, and Asp-646. N-linked (GlcNAc...) asparagine glycosylation is present at Asn-676. The helical transmembrane segment at 679–699 (LIFIIALGSIAVILFVTMIFV) threads the bilayer. The Cytoplasmic portion of the chain corresponds to 700 to 1088 (AVKCKRDNKE…GSKRLKDIVL (389 aa)). 4 disordered regions span residues 792-813 (NSRNAAPNHGYHHTFTGQGPQQ), 851-875 (DMEGNSLKDSGHEESDQTDSEHDVQ), 970-1032 (TFGK…ASST), and 1067-1088 (TLLQDGRDKESPGSKRLKDIVL). Basic and acidic residues predominate over residues 859 to 875 (DSGHEESDQTDSEHDVQ). Positions 1071–1088 (DGRDKESPGSKRLKDIVL) are enriched in basic and acidic residues.

As to quaternary structure, homodimer; antiparallel. Interacts with cadherin cdh2; the interaction confers robust cell adhesion activity on pcdh19. In the embryo, strongly expressed in the developing nervous system. At 12 hours post fertilization (hpf), shows a segmental expression pattern in the anterior third of the neural keel with strong expression in the presumptive forebrain, cerebellum/rhombomere 1 and rhombomere 4. By 24 hpf, expressed widely in the brain and spinal cord with higher expression levels in the ventral telencephalon, dorsal and central thalamus, optic tectum, central tegmentum, cerebellum and dorsolateral regions of the hindbrain. As development proceeds, expression becomes restricted to the dorsal and/or lateral regions of the central nervous system. Not detected in the spinal cord of two- and three-day old embryos. Expressed in the eye primordium, developing retina, lens and otic vesicle. Expressed in the larval optic tectum at 4 days post-fertilization where it localizes in discrete columns of neurons. Expressed throughout the adult brain with strong expression in the ventromedial telencephalon, periventricular regions of the thalamus and anterior hypothalamus, stratum periventriculare of the optic tectum, dorsal tegmental nucleus, granular regions of the cerebellar body and valvula, and superficial layers of the facial and vagal lobes.

Its subcellular location is the cell membrane. In terms of biological role, calcium-dependent cell-adhesion protein. Essential for the early stages of neurulation in the anterior neural plate. Shows little cell adhesion activity on its own but exhibits robust homophilic cell adhesion when in a complex with cadherin cdh2 and appears to mediate the adhesion while cdh2 acts as a cell adhesion cofactor in the complex. Functions with cdh2 to coordinate cell adhesion and cell movements during neurulation. Contributes to neural progenitor cell patterning with cdh2 by promoting homophilic cell interactions. Regulates the columnar organization of neurons in the optic tectum. In Danio rerio (Zebrafish), this protein is Protocadherin-19.